We begin with the raw amino-acid sequence, 99 residues long: Prostate and testis expressed protein 14 (99 aa).

Residues 1–21 (MGKNILLLLLGLSFVIGFLQA) form the signal peptide. Residues 22–99 (LRCLECDMLN…CHDQSLCNEF (78 aa)) form the UPAR/Ly6 domain. 5 cysteine pairs are disulfide-bonded: cysteine 24-cysteine 51, cysteine 27-cysteine 36, cysteine 43-cysteine 69, cysteine 73-cysteine 89, and cysteine 90-cysteine 96. Residue asparagine 40 is glycosylated (N-linked (GlcNAc...) asparagine). Asparagine 75 and asparagine 82 each carry an N-linked (GlcNAc...) asparagine glycan.

It belongs to the PATE family. As to quaternary structure, monomer.

The protein resides in the secreted. The sequence is that of Prostate and testis expressed protein 14 from Rattus norvegicus (Rat).